The following is an 870-amino-acid chain: MLNIAQRIFGSTNTRLVKSLYKIVNQINAIEHEFQILSDESLKNKTIEFKEQLNNGKTLDDILVPAFAVVREASKRILNMRHFDVQLIGGIVLHKGMISEMKTGEGKTLVATLAAYLNALEGKGVHVVTVNDYLAKRDADWMGELYNSLGITVGCILSDTNDLDRKKAYNCDIVYSTNNNLGFDYLRDNMKFSRNEMVQRGFNYAIVDEVDLILIDEARTPLIISGQVDQDIKMYNKIDKLIYELSEEDYELEEKHRNIFLTECGITKIENLLIQHKLISSNTSLYDIDNMIIMHYITQALRAHKIFSLDKDYIIKDGNIIIIDEFTGRMMDGRRYSDGLHQAIEAKEKLNVNNENQTLASITFQNYFRMYKKLSGMTGTAETESEELLGIYNLQVVQIPTNTPVQRIDLNDDIYCTEEEKFDAIIKFISECHKKLQPVLVGTISIEKSEILSKLLTKNKLKHSVLNARYHEQEAYIIAQAGIPGTITIATNMAGRGTDIQLGGNLKMLAKTTLANILDKEIISIKYKQLVEKVNKDKEIAIQAGGLCVIGTERHESRRIDNQLRGRSGRQGDPGLSKFFLSLEDDLLRIFGSDKIKGMLKKLGMKKGEAIQHTWISRAIEKAQHKVELRNYDIRKSLLKFDNVINEQRKVVFDQRNRILDNDSYNISLIYRDINSDIVNNIIHDKYYNLDDETYKLISSEITRIYSITLDYNTISELESKNKLIEHINNITDEFFNKKIAEFTSKEKDLWDNLTKKVMIMSLDYLWREHLAALDSLKCGINLRSIAQKDPLNEFKSEAFSMLESMMSNFYELIIQRLAHLKSDNIFHSYSKELNNLQSSQDINSIKISRNEKCPCGSGKKYKHCHGENI.

ATP contacts are provided by residues glutamine 86, 104–108, and aspartate 499; that span reads GEGKT. The Zn(2+) site is built by cysteine 854, cysteine 856, cysteine 865, and histidine 866.

It belongs to the SecA family. As to quaternary structure, monomer and homodimer. Part of the essential Sec protein translocation apparatus which comprises SecA, SecYEG and auxiliary proteins SecDF-YajC and YidC. Requires Zn(2+) as cofactor.

Its subcellular location is the cell inner membrane. It is found in the cytoplasm. It catalyses the reaction ATP + H2O + cellular proteinSide 1 = ADP + phosphate + cellular proteinSide 2.. Part of the Sec protein translocase complex. Interacts with the SecYEG preprotein conducting channel. Has a central role in coupling the hydrolysis of ATP to the transfer of proteins into and across the cell membrane, serving both as a receptor for the preprotein-SecB complex and as an ATP-driven molecular motor driving the stepwise translocation of polypeptide chains across the membrane. In Ehrlichia ruminantium (strain Welgevonden), this protein is Protein translocase subunit SecA.